We begin with the raw amino-acid sequence, 204 residues long: Holliday junction branch migration complex subunit RuvA (204 aa).

A domain I region spans residues 1–63 (MIASLRGTVI…EDAMKLYGFI (63 aa)). Residues 64–142 (DDQSREMFAL…AYTVGVVDDG (79 aa)) are domain II. A flexible linker region spans residues 143-151 (APTAPTQGV). The domain III stretch occupies residues 152 to 204 (APVVVVDQVTQALTGLGFTEKQADDAVAAVLSADPGLDTSAALRAALAKLGGK).

This sequence belongs to the RuvA family. As to quaternary structure, homotetramer. Forms an RuvA(8)-RuvB(12)-Holliday junction (HJ) complex. HJ DNA is sandwiched between 2 RuvA tetramers; dsDNA enters through RuvA and exits via RuvB. An RuvB hexamer assembles on each DNA strand where it exits the tetramer. Each RuvB hexamer is contacted by two RuvA subunits (via domain III) on 2 adjacent RuvB subunits; this complex drives branch migration. In the full resolvosome a probable DNA-RuvA(4)-RuvB(12)-RuvC(2) complex forms which resolves the HJ.

Its subcellular location is the cytoplasm. The RuvA-RuvB-RuvC complex processes Holliday junction (HJ) DNA during genetic recombination and DNA repair, while the RuvA-RuvB complex plays an important role in the rescue of blocked DNA replication forks via replication fork reversal (RFR). RuvA specifically binds to HJ cruciform DNA, conferring on it an open structure. The RuvB hexamer acts as an ATP-dependent pump, pulling dsDNA into and through the RuvAB complex. HJ branch migration allows RuvC to scan DNA until it finds its consensus sequence, where it cleaves and resolves the cruciform DNA. This is Holliday junction branch migration complex subunit RuvA from Corynebacterium efficiens (strain DSM 44549 / YS-314 / AJ 12310 / JCM 11189 / NBRC 100395).